The primary structure comprises 476 residues: Calcitonin gene-related peptide type 1 receptor (476 aa).

The signal sequence occupies residues 1–33; sequence METLQMGLLSRSALFKYIIIFLIMINTRGYVLA. Residues 34–154 lie on the Extracellular side of the membrane; sequence SQEQEAKTSV…FTHEKVKTAL (121 aa). 3 disulfide bridges follow: Cys-63/Cys-89, Cys-80/Cys-120, and Cys-103/Cys-142. N-linked (GlcNAc...) asparagine glycosylation is found at Asn-81, Asn-133, and Asn-138. A helical transmembrane segment spans residues 155-179; sequence NLYYLTIIGHGLSIASLLISLGIFF. Topologically, residues 180–190 are cytoplasmic; that stretch reads YFKNLSCQRIT. The chain crosses the membrane as a helical span at residues 191–213; the sequence is LHKNLFFSFVCNSIITIISLSAV. Residues 214-224 are Extracellular-facing; that stretch reads ANNQALVATNP. A helical membrane pass occupies residues 225 to 253; it reads VICKISQFIHLYLMGCNYFWMLCEGIYLH. The Cytoplasmic portion of the chain corresponds to 254 to 267; it reads TLIVVAVFAEKQHL. Residues 268–288 traverse the membrane as a helical segment; that stretch reads MWYYLLGWGFPLIPACIHAVA. Residues 289–304 are Extracellular-facing; that stretch reads RSLYYNDNCWISSETH. Residues 305–329 traverse the membrane as a helical segment; it reads LLYIIHGPICAALLVNLFFLLNIVR. Over 330 to 344 the chain is Cytoplasmic; sequence VLITKLKVTHQAESN. Residues 345–366 form a helical membrane-spanning segment; it reads LYMKAVRATLILVPLLGIEFVL. Residues 367-381 are Extracellular-facing; that stretch reads FPWKPEGRIAEEIYD. A helical membrane pass occupies residues 382–402; the sequence is YVMHILMHYQGLLVATIFCFF. The Cytoplasmic portion of the chain corresponds to 403 to 476; it reads NGEVQAVLKR…VFFKTEKQYM (74 aa).

It belongs to the G-protein coupled receptor 2 family.

The protein resides in the cell membrane. In terms of biological role, may function as G protein-coupled receptor for calcitonin-gene-related peptides and adrenomedullin. Specificity may be modulated by accessory proteins. May activate cAMP-dependent pathway. The chain is Calcitonin gene-related peptide type 1 receptor (calcrl) from Xenopus laevis (African clawed frog).